The sequence spans 610 residues: Synaptotagmin-like protein 3 (610 aa).

Residues 4 to 123 form the RabBD domain; the sequence is EIDLSALKEL…IKTGEWFYEE (120 aa). A disordered region spans residues 219–239; that stretch reads RQCVGQTERRSQSDTAVNVTT. C2 domains lie at 306-428 and 462-603; these read VTGE…TQSF and RPRK…NLWT.

Monomer. Binds NRXN1. Binds RAB27A that has been activated by GTP-binding via its N-terminus.

The protein localises to the endomembrane system. In terms of biological role, may act as Rab effector protein and play a role in vesicle trafficking. Binds phospholipids in the presence of calcium ions. The polypeptide is Synaptotagmin-like protein 3 (SYTL3) (Homo sapiens (Human)).